The sequence spans 69 residues: UPF0248 protein AF_0420 (69 aa).

This sequence belongs to the UPF0248 family.

This chain is UPF0248 protein AF_0420, found in Archaeoglobus fulgidus (strain ATCC 49558 / DSM 4304 / JCM 9628 / NBRC 100126 / VC-16).